The chain runs to 391 residues: Phosphoglycerate kinase (391 aa).

Residues 21-23, arginine 36, 59-62, arginine 113, and arginine 146 each bind substrate; these read DLN and HLGR. Residues lysine 197, glutamate 319, and 345–348 each bind ATP; that span reads GGDT.

It belongs to the phosphoglycerate kinase family. As to quaternary structure, monomer.

It is found in the cytoplasm. It carries out the reaction (2R)-3-phosphoglycerate + ATP = (2R)-3-phospho-glyceroyl phosphate + ADP. It participates in carbohydrate degradation; glycolysis; pyruvate from D-glyceraldehyde 3-phosphate: step 2/5. The chain is Phosphoglycerate kinase from Xanthomonas oryzae pv. oryzae (strain PXO99A).